The following is a 430-amino-acid chain: Ethylene-responsive transcription factor WRI1 (430 aa).

The segment covering 1-26 has biased composition (low complexity); sequence MKKRLTTSTCSSSPSSSVSSSTTTSS. A disordered region spans residues 1–66; it reads MKKRLTTSTC…PASTRRSSIY (66 aa). Over residues 53-63 the composition is skewed to polar residues; sequence NPTSPASTRRS. A DNA-binding region (AP2/ERF 1) is located at residues 65–131; sequence IYRGVTRHRW…WGPDTILNFP (67 aa). Residue T70 is modified to Phosphothreonine; by KIN10. S166 carries the phosphoserine; by KIN10 modification. The AP2/ERF 2 DNA-binding region spans 167–225; that stretch reads KYRGVARHHHNGRWEARIGRVFGNKYLYLGTYNTQEEAAAAYDMAAIEYRGANAVTNFD. Basic and acidic residues predominate over residues 260–274; it reads VETREAKEEPREEVK. Disordered regions lie at residues 260 to 297 and 398 to 422; these read VETR…EQQE and SPPS…TTTT.

This sequence belongs to the AP2/ERF transcription factor family. AP2 subfamily. In terms of assembly, interacts with KIN10 and KIN11. In terms of processing, ubiquitinated. Post-translationally, the phosphorylation at Thr-70 and Ser-166 by KIN10 facilitates its degradation via the proteasomal pathway. In terms of tissue distribution, mostly expressed in siliques, especially in seeds. Also detected in roots and flowers, and, to a lower extent, in leaves stems and seedlings.

The protein resides in the nucleus. With respect to regulation, down-regulated by KIN10 that controls its protein stability under a phosphorylation-dependent manner. In terms of biological role, may be involved in the regulation of gene expression by stress factors and by components of stress signal transduction pathways. Transcriptional activator involved in the activation of a subset of sugar-responsive genes and the control of carbon flow from sucrose import to oil accumulation in developing seeds. Binds to the GCC-box pathogenesis-related promoter element. Promotes sugar uptake and seed oil accumulation by glycolysis. Required for embryo development, seed germination and, indirectly, for seedling establishment. Negative regulator of the ABA-mediated germination inhibition. This chain is Ethylene-responsive transcription factor WRI1 (WRI1), found in Arabidopsis thaliana (Mouse-ear cress).